Here is a 762-residue protein sequence, read N- to C-terminus: uncharacterized protein (762 aa).

A disordered region spans residues 1 to 26 (MENLKSASPEEDSPRHGDNMGKPKRI). A compositionally biased stretch (basic and acidic residues) spans 12 to 21 (DSPRHGDNMG). A DNA-binding region (zn(2)-C6 fungal-type) is located at residues 30-57 (CDMCRKRKIRCDGKQPACSNCVSHGIPC). Positions 647–668 (QSHVPPRISSNHSDTSVKSNSP) are disordered.

It is found in the nucleus. This is an uncharacterized protein from Schizosaccharomyces pombe (strain 972 / ATCC 24843) (Fission yeast).